The chain runs to 281 residues: Glyoxalase 1 (281 aa).

2 VOC domains span residues 4-127 and 132-251; these read RALH…IGKA and KVLR…FVGD.

Belongs to the glyoxalase I family.

Its function is as follows. Thought to act as a glyoxalase. May remove methylglyoxal from mitochondrial proteins. Has roles in reducing oxidative stress and increasing lifespan. The polypeptide is Glyoxalase 1 (Caenorhabditis briggsae).